The primary structure comprises 88 residues: MTYQDGSRRMRGRGGRKKVCEFSRLGILPDYKDPERLKRFLGPTGKILPRRRTGLSAKMQRKLTIAIKRARHMALLPFVERSITDRRR.

This sequence belongs to the bacterial ribosomal protein bS18 family. In terms of assembly, part of the 30S ribosomal subunit. Forms a tight heterodimer with protein bS6.

Its function is as follows. Binds as a heterodimer with protein bS6 to the central domain of the 16S rRNA, where it helps stabilize the platform of the 30S subunit. This is Small ribosomal subunit protein bS18A from Roseiflexus sp. (strain RS-1).